We begin with the raw amino-acid sequence, 118 residues long: Large ribosomal subunit protein bL20 (118 aa).

It belongs to the bacterial ribosomal protein bL20 family.

Functionally, binds directly to 23S ribosomal RNA and is necessary for the in vitro assembly process of the 50S ribosomal subunit. It is not involved in the protein synthesizing functions of that subunit. This is Large ribosomal subunit protein bL20 from Psychromonas ingrahamii (strain DSM 17664 / CCUG 51855 / 37).